A 163-amino-acid chain; its full sequence is Nucleotide-binding protein CKO_02735 (163 aa).

The protein belongs to the YajQ family.

Functionally, nucleotide-binding protein. The polypeptide is Nucleotide-binding protein CKO_02735 (Citrobacter koseri (strain ATCC BAA-895 / CDC 4225-83 / SGSC4696)).